The primary structure comprises 125 residues: Translation initiation factor 5A (125 aa).

Lys-35 is subject to Hypusine.

It belongs to the eIF-5A family.

The protein localises to the cytoplasm. Functions by promoting the formation of the first peptide bond. This Methanosphaerula palustris (strain ATCC BAA-1556 / DSM 19958 / E1-9c) protein is Translation initiation factor 5A (eIF5A).